The chain runs to 310 residues: Upstream stimulatory factor 1 (310 aa).

Polar residues predominate over residues 1-17 (MKGQQKTAETEEGTVQI). Disordered stretches follow at residues 1-26 (MKGQ…ATGE) and 171-209 (QGGS…EVER). Positions 190 to 209 (EAPRTTRDEKRRAQHNEVER) are enriched in basic and acidic residues. Residues 199–254 (KRRAQHNEVERRRRDKINNWIVQLSKIIPDCSMESTKSGQSKGGILSKACDYIQEL) enclose the bHLH domain. A leucine-zipper region spans residues 271–292 (LQLDNDVLRQQVEDLKNKNLLL). Lys306 is covalently cross-linked (Glycyl lysine isopeptide (Lys-Gly) (interchain with G-Cter in SUMO2)).

Efficient DNA binding requires dimerization with another bHLH protein. Binds DNA as a homodimer or a heterodimer (USF1/USF2). Interacts with varicella-zoster virus IE62 protein.

It localises to the nucleus. In terms of biological role, transcription factor that binds to a symmetrical DNA sequence (E-boxes) (5'-CACGTG-3') that is found in a variety of viral and cellular promoters. The chain is Upstream stimulatory factor 1 (USF1) from Homo sapiens (Human).